A 239-amino-acid chain; its full sequence is Uridylate kinase (239 aa).

Position 13-16 (13-16) interacts with ATP; the sequence is KLSG. Residue Gly-55 participates in UMP binding. Residues Gly-56 and Arg-60 each coordinate ATP. Residues Asp-75 and 136–143 contribute to the UMP site; that span reads TGNPFFTT. Residues Thr-163, Tyr-169, and Asp-172 each coordinate ATP.

This sequence belongs to the UMP kinase family. Homohexamer.

The protein localises to the cytoplasm. The catalysed reaction is UMP + ATP = UDP + ADP. The protein operates within pyrimidine metabolism; CTP biosynthesis via de novo pathway; UDP from UMP (UMPK route): step 1/1. With respect to regulation, inhibited by UTP. In terms of biological role, catalyzes the reversible phosphorylation of UMP to UDP. The chain is Uridylate kinase from Chromobacterium violaceum (strain ATCC 12472 / DSM 30191 / JCM 1249 / CCUG 213 / NBRC 12614 / NCIMB 9131 / NCTC 9757 / MK).